The following is a 278-amino-acid chain: Nucleotide-binding protein LHK_02029 (278 aa).

An ATP-binding site is contributed by 8–15; it reads GLAGSGKS. 57-60 contributes to the GTP binding site; the sequence is DTRD.

This sequence belongs to the RapZ-like family.

Functionally, displays ATPase and GTPase activities. In Laribacter hongkongensis (strain HLHK9), this protein is Nucleotide-binding protein LHK_02029.